The following is a 443-amino-acid chain: Protein PRRC1 (443 aa).

The segment at 1–165 (MMEESGIETT…FSAPPVTGIL (165 aa)) is disordered. The segment covering 29–45 (EAHSAATSSFSSPNVSG) has biased composition (polar residues). The segment covering 59–72 (PSLPPVQPSAPPPF) has biased composition (pro residues). 2 stretches are compositionally biased toward low complexity: residues 81–96 (VPLSGTSVPPSVSPSP) and 109–134 (PPATSASGALLSAPPSGPPISGFSVG). A Phosphoserine modification is found at S406.

It belongs to the PRRC1 family. Interacts with PRKAR1A; resulting in PKA activation.

The protein localises to the golgi apparatus. The protein resides in the cytoplasm. Its function is as follows. May act as a regulator of the protein kinase A (PKA) during embryonic development. In Mus musculus (Mouse), this protein is Protein PRRC1 (Prrc1).